The sequence spans 183 residues: Acireductone dioxygenase (183 aa).

The Fe(2+) site is built by His-95, His-97, Glu-101, and His-139. Residues His-95, His-97, Glu-101, and His-139 each contribute to the Ni(2+) site.

Belongs to the acireductone dioxygenase (ARD) family. As to quaternary structure, monomer. Fe(2+) is required as a cofactor. The cofactor is Ni(2+).

It catalyses the reaction 1,2-dihydroxy-5-(methylsulfanyl)pent-1-en-3-one + O2 = 3-(methylsulfanyl)propanoate + CO + formate + 2 H(+). The catalysed reaction is 1,2-dihydroxy-5-(methylsulfanyl)pent-1-en-3-one + O2 = 4-methylsulfanyl-2-oxobutanoate + formate + 2 H(+). It participates in amino-acid biosynthesis; L-methionine biosynthesis via salvage pathway; L-methionine from S-methyl-5-thio-alpha-D-ribose 1-phosphate: step 5/6. In terms of biological role, catalyzes 2 different reactions between oxygen and the acireductone 1,2-dihydroxy-3-keto-5-methylthiopentene (DHK-MTPene) depending upon the metal bound in the active site. Fe-containing acireductone dioxygenase (Fe-ARD) produces formate and 2-keto-4-methylthiobutyrate (KMTB), the alpha-ketoacid precursor of methionine in the methionine recycle pathway. Ni-containing acireductone dioxygenase (Ni-ARD) produces methylthiopropionate, carbon monoxide and formate, and does not lie on the methionine recycle pathway. The chain is Acireductone dioxygenase from Hydrogenobaculum sp. (strain Y04AAS1).